Reading from the N-terminus, the 747-residue chain is NAD-dependent protein deacetylase sirtuin-1 (747 aa).

The segment at 1 to 135 (MADEAALALQ…DDEGEEEEEA (135 aa)) is disordered. N-acetylalanine is present on Ala-2. The segment at 2–139 (ADEAALALQP…EEEEEAAAAA (138 aa)) is interaction with CLOCK. Positions 2–268 (ADEAALALQP…LTGAGVSVSC (267 aa)) are interaction with H1-4. A phosphoserine mark is found at Ser-14 and Ser-26. Residue Ser-27 is modified to Phosphoserine; by MAPK8. A Nuclear localization signal motif is present at residues 32–39 (PLRKRPRR). Phosphoserine; by MAPK8 is present on Ser-47. The span at 61-100 (PAAARGCPGAAAAALWREAEAEAAAAGGEQEAQATAAAGE) shows a compositional bias: low complexity. Over residues 120 to 135 (LYDEDDDDEGEEEEEA) the composition is skewed to acidic residues. The Nuclear export signal motif lies at 138-145 (AAIGYRDN). The segment at 143–541 (RDNLLFGDEI…LHVSEDSSSP (399 aa)) is interaction with CCAR2. A phosphoserine mark is found at Ser-159, Ser-162, Ser-172, and Ser-173. A Nuclear localization signal motif is present at residues 223–230 (IVINILSE). A Deacetylase sirtuin-type domain is found at 236 to 496 (KRKDINTIED…NELCHRLGGE (261 aa)). Lys-238 bears the N6-acetyllysine mark. Residues 256–259 (IIVL) form a required for interaction with the sumoylated form of CCAR2 region. Residues 261–280 (GAGVSVSCGIPDFRSRDGIY) and 345–348 (QNID) each bind NAD(+). The active-site Proton acceptor is the His-363. Residues Cys-371 and Cys-374 each coordinate Zn(2+). Lys-377 carries the post-translational modification N6-acetyllysine. Zn(2+)-binding residues include Cys-395 and Cys-398. S-nitrosocysteine is present on residues Cys-395 and Cys-398. The Nuclear export signal signature appears at 425 to 431 (AMKYDKD). N6-acetyllysine is present on Lys-430. NAD(+) is bound by residues 440–442 (GSS), 465–467 (NRE), and Cys-482. Lys-513 bears the N6-acetyllysine mark. Disordered regions lie at residues 523–549 (YLSELPPTPLHVSEDSSSPERTSPPDS) and 562–587 (SNDDLDVSESKGCMEEKPQEVQTSRN). Thr-530 carries the phosphothreonine; by DYRK1A, DYRK3 and MAPK8 modification. Ser-535 is subject to Phosphoserine. Residues 537-549 (DSSSPERTSPPDS) are compositionally biased toward polar residues. The phosphorylated at one of three serine residues stretch occupies residues 538–540 (SSS). Position 544 is a phosphothreonine (Thr-544). Ser-545 carries the post-translational modification Phosphoserine. A compositionally biased stretch (basic and acidic residues) spans 569 to 580 (SESKGCMEEKPQ). Lys-610 is subject to N6-acetyllysine. Residues Ser-659 and Ser-661 each carry the phosphoserine; by CaMK2 modification. The tract at residues 663-726 (DDVLSSSSCG…FGTDGDDQEA (64 aa)) is disordered. Residues 666–677 (LSSSSCGSNSDS) show a composition bias toward low complexity. The span at 687-707 (EPMEDESEIEEFYNGLEDEPD) shows a compositional bias: acidic residues. Thr-719 carries the post-translational modification Phosphothreonine. Residue Ser-747 is modified to Phosphoserine.

Belongs to the sirtuin family. Class I subfamily. As to quaternary structure, interacts with XBP1 isoform 2. Found in a complex with PCAF and MYOD1. Interacts with FOXO1; the interaction deacetylates FOXO1, resulting in its nuclear retention and promotion of its transcriptional activity Component of the eNoSC complex, composed of SIRT1, SUV39H1 and RRP8. Interacts with HES1, HEY2 and PML. Interacts with RPS19BP1/AROS. Interacts with CCAR2 (via N-terminus); the interaction disrupts the interaction between SIRT1 and p53/TP53. Interacts with SETD7; the interaction induces the dissociation of SIRT1 from p53/TP53 and increases p53/TP53 activity. Interacts with MYCN, NR1I2, CREBZF, TSC2, TLE1, FOS, JUN, NR0B2, PPARG, NCOR, IRS1, IRS2 and NMNAT1. Interacts with HNF1A; the interaction occurs under nutrient restriction. Interacts with SUZ12; the interaction mediates the association with the PRC4 histone methylation complex which is specific as an association with PCR2 and PCR3 complex variants is not found. Interacts with BCL6; leads to a epigenetic repression of specific target genes. Interacts with CLOCK, BMAL1 and PER2. Interacts with PPARA; the interaction seems to be modulated by NAD(+) levels. Interacts with NR1H3 and this interaction is inhibited in the presence of CCAR2. Interacts with CHEK2. Interacts with p53/TP53. Exhibits a preferential interaction with sumoylated CCAR2 over its unmodified form. Interacts with PACS2. Interacts with SIRT7. Interacts with PUS7. Interacts with TULP3. Interacts with MORN3; the interaction enhances the ubiquitination of p53/TP53. In terms of assembly, (Microbial infection) Interacts with HIV-1 Tat. Requires Zn(2+) as cofactor. Methylated on multiple lysine residues; methylation is enhanced after DNA damage and is dispensable for deacetylase activity toward p53/TP53. Post-translationally, phosphorylated. Phosphorylated by STK4/MST1, resulting in inhibition of SIRT1-mediated p53/TP53 deacetylation. Phosphorylation by MAPK8/JNK1 at Ser-27, Ser-47, and Thr-530 leads to increased nuclear localization and enzymatic activity. Phosphorylation at Thr-530 by DYRK1A and DYRK3 activates deacetylase activity and promotes cell survival. Phosphorylation by mammalian target of rapamycin complex 1 (mTORC1) at Ser-47 inhibits deacetylation activity. Phosphorylated by CaMK2, leading to increased p53/TP53 and NF-kappa-B p65/RELA deacetylation activity. Phosphorylation at Ser-27 implicating MAPK9 is linked to protein stability. There is some ambiguity for some phosphosites: Ser-159/Ser-162 and Thr-544/Ser-545. In terms of processing, proteolytically cleaved by cathepsin B upon TNF-alpha treatment to yield catalytic inactive but stable SirtT1 75 kDa fragment (75SirT1). S-nitrosylated by GAPDH, leading to inhibit the NAD-dependent protein deacetylase activity. Post-translationally, acetylated at various Lys residues. Deacetylated via an autocatalytic mechanism. Autodeacetylation at Lys-238 promotes its protein deacetylase activity. In terms of processing, ubiquitinated; leading to degradation. Deubiquitinated by USP22; leading to stabilization. In terms of tissue distribution, widely expressed.

It is found in the nucleus. The protein resides in the PML body. The protein localises to the cytoplasm. Its subcellular location is the mitochondrion. The catalysed reaction is N(6)-acetyl-L-lysyl-[protein] + NAD(+) + H2O = 2''-O-acetyl-ADP-D-ribose + nicotinamide + L-lysyl-[protein]. The enzyme catalyses N(6)-propanoyl-L-lysyl-[protein] + NAD(+) + H2O = 3''-O-propanoyl-ADP-D-ribose + nicotinamide + L-lysyl-[protein]. It catalyses the reaction N(6)-(2E)-butenoyl-L-lysyl-[protein] + NAD(+) + H2O = 2''-O-(2E)-but-2-enoyl-ADP-D-ribose + nicotinamide + L-lysyl-[protein]. It carries out the reaction N(6)-[(S)-lactoyl]-L-lysyl-[protein] + NAD(+) + H2O = 2''-O-(S)-lactoyl-ADP-D-ribose + nicotinamide + L-lysyl-[protein]. With respect to regulation, inhibited by nicotinamide. Activated by resveratrol (3,5,4'-trihydroxy-trans-stilbene), butein (3,4,2',4'-tetrahydroxychalcone), piceatannol (3,5,3',4'-tetrahydroxy-trans-stilbene), Isoliquiritigenin (4,2',4'-trihydroxychalcone), fisetin (3,7,3',4'-tetrahydroxyflavone) and quercetin (3,5,7,3',4'-pentahydroxyflavone). MAPK8/JNK1 and RPS19BP1/AROS act as positive regulators of deacetylation activity. Negatively regulated by CCAR2. Its function is as follows. NAD-dependent protein deacetylase that links transcriptional regulation directly to intracellular energetics and participates in the coordination of several separated cellular functions such as cell cycle, response to DNA damage, metabolism, apoptosis and autophagy. Can modulate chromatin function through deacetylation of histones and can promote alterations in the methylation of histones and DNA, leading to transcriptional repression. Deacetylates a broad range of transcription factors and coregulators, thereby regulating target gene expression positively and negatively. Serves as a sensor of the cytosolic ratio of NAD(+)/NADH which is altered by glucose deprivation and metabolic changes associated with caloric restriction. Is essential in skeletal muscle cell differentiation and in response to low nutrients mediates the inhibitory effect on skeletal myoblast differentiation which also involves 5'-AMP-activated protein kinase (AMPK) and nicotinamide phosphoribosyltransferase (NAMPT). Component of the eNoSC (energy-dependent nucleolar silencing) complex, a complex that mediates silencing of rDNA in response to intracellular energy status and acts by recruiting histone-modifying enzymes. The eNoSC complex is able to sense the energy status of cell: upon glucose starvation, elevation of NAD(+)/NADP(+) ratio activates SIRT1, leading to histone H3 deacetylation followed by dimethylation of H3 at 'Lys-9' (H3K9me2) by SUV39H1 and the formation of silent chromatin in the rDNA locus. Deacetylates 'Lys-266' of SUV39H1, leading to its activation. Inhibits skeletal muscle differentiation by deacetylating PCAF and MYOD1. Deacetylates H2A and 'Lys-26' of H1-4. Deacetylates 'Lys-16' of histone H4 (in vitro). Involved in NR0B2/SHP corepression function through chromatin remodeling: Recruited to LRH1 target gene promoters by NR0B2/SHP thereby stimulating histone H3 and H4 deacetylation leading to transcriptional repression. Proposed to contribute to genomic integrity via positive regulation of telomere length; however, reports on localization to pericentromeric heterochromatin are conflicting. Proposed to play a role in constitutive heterochromatin (CH) formation and/or maintenance through regulation of the available pool of nuclear SUV39H1. Upon oxidative/metabolic stress decreases SUV39H1 degradation by inhibiting SUV39H1 polyubiquitination by MDM2. This increase in SUV39H1 levels enhances SUV39H1 turnover in CH, which in turn seems to accelerate renewal of the heterochromatin which correlates with greater genomic integrity during stress response. Deacetylates 'Lys-382' of p53/TP53 and impairs its ability to induce transcription-dependent proapoptotic program and modulate cell senescence. Deacetylates TAF1B and thereby represses rDNA transcription by the RNA polymerase I. Deacetylates MYC, promotes the association of MYC with MAX and decreases MYC stability leading to compromised transformational capability. Deacetylates FOXO3 in response to oxidative stress thereby increasing its ability to induce cell cycle arrest and resistance to oxidative stress but inhibiting FOXO3-mediated induction of apoptosis transcriptional activity; also leading to FOXO3 ubiquitination and protesomal degradation. Appears to have a similar effect on MLLT7/FOXO4 in regulation of transcriptional activity and apoptosis. Deacetylates DNMT1; thereby impairs DNMT1 methyltransferase-independent transcription repressor activity, modulates DNMT1 cell cycle regulatory function and DNMT1-mediated gene silencing. Deacetylates RELA/NF-kappa-B p65 thereby inhibiting its transactivating potential and augments apoptosis in response to TNF-alpha. Deacetylates HIF1A, KAT5/TIP60, RB1 and HIC1. Deacetylates FOXO1 resulting in its nuclear retention and enhancement of its transcriptional activity leading to increased gluconeogenesis in liver. Inhibits E2F1 transcriptional activity and apoptotic function, possibly by deacetylation. Involved in HES1- and HEY2-mediated transcriptional repression. In cooperation with MYCN seems to be involved in transcriptional repression of DUSP6/MAPK3 leading to MYCN stabilization by phosphorylation at 'Ser-62'. Deacetylates MEF2D. Required for antagonist-mediated transcription suppression of AR-dependent genes which may be linked to local deacetylation of histone H3. Represses HNF1A-mediated transcription. Required for the repression of ESRRG by CREBZF. Deacetylates NR1H3 and NR1H2 and deacetylation of NR1H3 at 'Lys-434' positively regulates transcription of NR1H3:RXR target genes, promotes NR1H3 proteasomal degradation and results in cholesterol efflux; a promoter clearing mechanism after reach round of transcription is proposed. Involved in lipid metabolism: deacetylates LPIN1, thereby inhibiting diacylglycerol synthesis. Implicated in regulation of adipogenesis and fat mobilization in white adipocytes by repression of PPARG which probably involves association with NCOR1 and SMRT/NCOR2. Deacetylates p300/EP300 and PRMT1. Deacetylates ACSS2 leading to its activation, and HMGCS1 deacetylation. Involved in liver and muscle metabolism. Through deacetylation and activation of PPARGC1A is required to activate fatty acid oxidation in skeletal muscle under low-glucose conditions and is involved in glucose homeostasis. Involved in regulation of PPARA and fatty acid beta-oxidation in liver. Involved in positive regulation of insulin secretion in pancreatic beta cells in response to glucose; the function seems to imply transcriptional repression of UCP2. Proposed to deacetylate IRS2 thereby facilitating its insulin-induced tyrosine phosphorylation. Deacetylates SREBF1 isoform SREBP-1C thereby decreasing its stability and transactivation in lipogenic gene expression. Involved in DNA damage response by repressing genes which are involved in DNA repair, such as XPC and TP73, deacetylating XRCC6/Ku70, and facilitating recruitment of additional factors to sites of damaged DNA, such as SIRT1-deacetylated NBN can recruit ATM to initiate DNA repair and SIRT1-deacetylated XPA interacts with RPA2. Also involved in DNA repair of DNA double-strand breaks by homologous recombination and specifically single-strand annealing independently of XRCC6/Ku70 and NBN. Promotes DNA double-strand breaks by mediating deacetylation of SIRT6. Transcriptional suppression of XPC probably involves an E2F4:RBL2 suppressor complex and protein kinase B (AKT) signaling. Transcriptional suppression of TP73 probably involves E2F4 and PCAF. Deacetylates WRN thereby regulating its helicase and exonuclease activities and regulates WRN nuclear translocation in response to DNA damage. Deacetylates APEX1 at 'Lys-6' and 'Lys-7' and stimulates cellular AP endonuclease activity by promoting the association of APEX1 to XRCC1. Catalyzes deacetylation of ERCC4/XPF, thereby impairing interaction with ERCC1 and nucleotide excision repair (NER). Increases p53/TP53-mediated transcription-independent apoptosis by blocking nuclear translocation of cytoplasmic p53/TP53 and probably redirecting it to mitochondria. Deacetylates XRCC6/Ku70 at 'Lys-539' and 'Lys-542' causing it to sequester BAX away from mitochondria thereby inhibiting stress-induced apoptosis. Is involved in autophagy, presumably by deacetylating ATG5, ATG7 and MAP1LC3B/ATG8. Deacetylates AKT1 which leads to enhanced binding of AKT1 and PDK1 to PIP3 and promotes their activation. Proposed to play role in regulation of STK11/LBK1-dependent AMPK signaling pathways implicated in cellular senescence which seems to involve the regulation of the acetylation status of STK11/LBK1. Can deacetylate STK11/LBK1 and thereby increase its activity, cytoplasmic localization and association with STRAD; however, the relevance of such activity in normal cells is unclear. In endothelial cells is shown to inhibit STK11/LBK1 activity and to promote its degradation. Deacetylates SMAD7 at 'Lys-64' and 'Lys-70' thereby promoting its degradation. Deacetylates CIITA and augments its MHC class II transactivation and contributes to its stability. Deacetylates MECOM/EVI1. Deacetylates PML at 'Lys-487' and this deacetylation promotes PML control of PER2 nuclear localization. During the neurogenic transition, represses selective NOTCH1-target genes through histone deacetylation in a BCL6-dependent manner and leading to neuronal differentiation. Regulates the circadian expression of several core clock genes, including BMAL1, RORC, PER2 and CRY1 and plays a critical role in maintaining a controlled rhythmicity in histone acetylation, thereby contributing to circadian chromatin remodeling. Deacetylates BMAL1 and histones at the circadian gene promoters in order to facilitate repression by inhibitory components of the circadian oscillator. Deacetylates PER2, facilitating its ubiquitination and degradation by the proteasome. Protects cardiomyocytes against palmitate-induced apoptosis. Deacetylates XBP1 isoform 2; deacetylation decreases protein stability of XBP1 isoform 2 and inhibits its transcriptional activity. Deacetylates PCK1 and directs its activity toward phosphoenolpyruvate production promoting gluconeogenesis. Involved in the CCAR2-mediated regulation of PCK1 and NR1D1. Deacetylates CTNB1 at 'Lys-49'. In POMC (pro-opiomelanocortin) neurons, required for leptin-induced activation of PI3K signaling. Deacetylates SOX9; promoting SOX9 nuclear localization and transactivation activity. Involved in the regulation of centrosome duplication: deacetylates CENATAC in G1 phase, allowing for SASS6 accumulation on the centrosome and subsequent procentriole assembly. Deacetylates NDC80/HEC1. In addition to protein deacetylase activity, also acts as a protein-lysine deacylase by mediating protein delactylation, depropionylation and decrotonylation. Mediates depropionylation of Osterix (SP7). Catalyzes decrotonylation of histones; it however does not represent a major histone decrotonylase. Mediates protein delactylation of TEAD1 and YAP1. Functionally, deacetylates 'Lys-382' of p53/TP53, however with lower activity than isoform 1. In combination, the two isoforms exert an additive effect. Isoform 2 regulates p53/TP53 expression and cellular stress response and is in turn repressed by p53/TP53 presenting a SIRT1 isoform-dependent auto-regulatory loop. In terms of biological role, catalytically inactive 75SirT1 may be involved in regulation of apoptosis. May be involved in protecting chondrocytes from apoptotic death by associating with cytochrome C and interfering with apoptosome assembly. (Microbial infection) In case of HIV-1 infection, interacts with and deacetylates the viral Tat protein. The viral Tat protein inhibits SIRT1 deacetylation activity toward RELA/NF-kappa-B p65, thereby potentiates its transcriptional activity and SIRT1 is proposed to contribute to T-cell hyperactivation during infection. This is NAD-dependent protein deacetylase sirtuin-1 from Homo sapiens (Human).